The primary structure comprises 368 residues: Glucose 1-dehydrogenase 2 (368 aa).

Cysteine 41 provides a ligand contact to Zn(2+). Position 43 (threonine 43) interacts with substrate. Zn(2+) contacts are provided by histidine 68 and glutamate 69. Asparagine 91 serves as a coordination point for substrate. 5 residues coordinate Zn(2+): cysteine 95, cysteine 98, cysteine 101, cysteine 109, and glutamine 152. Glutamine 152 and aspartate 156 together coordinate substrate. NADP(+) is bound by residues 213-215, 279-281, 307-309, and lysine 356; these read NRR, FGF, and LDN. Asparagine 309 contributes to the substrate binding site.

This sequence belongs to the zinc-containing alcohol dehydrogenase family. Glucose 1-dehydrogenase subfamily. Zn(2+) is required as a cofactor.

The enzyme catalyses D-glucose + NAD(+) = D-glucono-1,5-lactone + NADH + H(+). It carries out the reaction D-glucose + NADP(+) = D-glucono-1,5-lactone + NADPH + H(+). Functionally, catalyzes the NAD(P)(+)-dependent oxidation of D-glucose to D-gluconate via gluconolactone. Can utilize both NAD(+) and NADP(+) as electron acceptor. Is involved in the degradation of glucose through a non-phosphorylative variant of the Entner-Doudoroff pathway. The polypeptide is Glucose 1-dehydrogenase 2 (Saccharolobus solfataricus (strain ATCC 35092 / DSM 1617 / JCM 11322 / P2) (Sulfolobus solfataricus)).